We begin with the raw amino-acid sequence, 524 residues long: Na(+)/H(+) antiporter NhaG (524 aa).

The next 11 membrane-spanning stretches (helical) occupy residues 6 to 26 (LHHIFELGFFVVMIAAGITAI), 33 to 53 (PYPIALVIVGTIIGLVHIPLF), 59 to 79 (FITEGEVFNFVIITLFLPALL), 98 to 118 (VLALFGGTLISFLIVGFSSMW), 126 to 146 (AAFVFAALMSATDPVSVLSIF), 169 to 189 (LAVVLFNISAFYLMTYLDLGI), 193 to 213 (GLGLWEFVKVISLGLIIGGVL), 242 to 262 (FLLAEMAGASGVIAVVVAALI), 283 to 303 (FWDVAALLANSLVFLMVGLEI), 312 to 332 (WGLAIMAIVIVLIARSAAVYI), and 374 to 394 (DILVFAFSVVLFSLVVQGLTI).

The protein belongs to the monovalent cation:proton antiporter 1 (CPA1) transporter (TC 2.A.36) family.

Its subcellular location is the cell membrane. In terms of biological role, na(+)/H(+) antiporter that extrudes sodium in exchange for external protons. Can also transport lithium. This Bacillus atrophaeus protein is Na(+)/H(+) antiporter NhaG (nhaG).